The following is a 371-amino-acid chain: Lombricine kinase (371 aa).

The Phosphagen kinase N-terminal domain maps to 1–86 (MPKFTARQNF…FDAVINEKHG (86 aa)). A Phosphagen kinase C-terminal domain is found at 113-355 (YVKSARIRTG…GKLIEYEKLL (243 aa)). Residues 116–120 (SARIR), histidine 179, arginine 224, arginine 280, 308–313 (RGTGGE), and aspartate 323 each bind ATP.

Belongs to the ATP:guanido phosphotransferase family. In terms of assembly, homodimer.

It catalyses the reaction L-lombricine + ATP = N-phospho-L-lombricine + ADP + H(+). The chain is Lombricine kinase from Eisenia fetida (Red wiggler worm).